We begin with the raw amino-acid sequence, 176 residues long: Small ribosomal subunit protein uS5c (176 aa).

An S5 DRBM domain is found at Leu26–Leu89.

Belongs to the universal ribosomal protein uS5 family. In terms of assembly, part of the 30S ribosomal subunit. Contacts protein S4.

Its subcellular location is the plastid. The protein resides in the chloroplast. With S4 and S12 plays an important role in translational accuracy. The protein is Small ribosomal subunit protein uS5c (rps5) of Phaeodactylum tricornutum (strain CCAP 1055/1).